Here is a 339-residue protein sequence, read N- to C-terminus: D-alanine--D-alanine ligase (339 aa).

Residues lysine 126–glutamate 333 enclose the ATP-grasp domain. ATP is bound at residue alanine 158 to glutamate 213. Residues aspartate 286, glutamate 300, and asparagine 302 each contribute to the Mg(2+) site.

The protein belongs to the D-alanine--D-alanine ligase family. Requires Mg(2+) as cofactor. The cofactor is Mn(2+).

The protein resides in the cytoplasm. It catalyses the reaction 2 D-alanine + ATP = D-alanyl-D-alanine + ADP + phosphate + H(+). It functions in the pathway cell wall biogenesis; peptidoglycan biosynthesis. Its function is as follows. Cell wall formation. This chain is D-alanine--D-alanine ligase, found in Deinococcus radiodurans (strain ATCC 13939 / DSM 20539 / JCM 16871 / CCUG 27074 / LMG 4051 / NBRC 15346 / NCIMB 9279 / VKM B-1422 / R1).